Reading from the N-terminus, the 320-residue chain is Acyl-coenzyme A thioesterase 8 (320 aa).

Active-site charge relay system residues include Asp233, Ser255, and Gln305. Residues 318-320 (SKL) carry the Microbody targeting signal motif.

The protein belongs to the C/M/P thioester hydrolase family. As to quaternary structure, homodimer.

The protein localises to the peroxisome matrix. The enzyme catalyses choloyl-CoA + H2O = cholate + CoA + H(+). The catalysed reaction is chenodeoxycholoyl-CoA + H2O = chenodeoxycholate + CoA + H(+). It carries out the reaction acetyl-CoA + H2O = acetate + CoA + H(+). It catalyses the reaction butanoyl-CoA + H2O = butanoate + CoA + H(+). The enzyme catalyses hexanoyl-CoA + H2O = hexanoate + CoA + H(+). The catalysed reaction is octanoyl-CoA + H2O = octanoate + CoA + H(+). It carries out the reaction decanoyl-CoA + H2O = decanoate + CoA + H(+). It catalyses the reaction dodecanoyl-CoA + H2O = dodecanoate + CoA + H(+). The enzyme catalyses tetradecanoyl-CoA + H2O = tetradecanoate + CoA + H(+). The catalysed reaction is 4,8-dimethylnonanoyl-CoA + H2O = 4,8-dimethylnonanoate + CoA + H(+). It carries out the reaction 2,6-dimethylheptanoyl-CoA + H2O = 2,6-dimethylheptanoate + CoA + H(+). It catalyses the reaction malonyl-CoA + H2O = malonate + CoA + H(+). The enzyme catalyses acetoacetyl-CoA + H2O = acetoacetate + CoA + H(+). The catalysed reaction is propanoyl-CoA + H2O = propanoate + CoA + H(+). It carries out the reaction succinyl-CoA + H2O = succinate + CoA + H(+). It catalyses the reaction glutaryl-CoA + H2O = glutarate + CoA + H(+). The enzyme catalyses hexanedioyl-CoA + H2O = hexanedioate + CoA + H(+). The catalysed reaction is octanedioyl-CoA + H2O = octanedioate + CoA + H(+). It carries out the reaction decanedioyl-CoA + H2O = decanedioate + CoA + H(+). It catalyses the reaction dodecanedioyl-CoA + H2O = dodecanedioate + CoA + H(+). The enzyme catalyses (9Z)-tetradecenoyl-CoA + H2O = (9Z)-tetradecenoate + CoA + H(+). The catalysed reaction is hexadecanoyl-CoA + H2O = hexadecanoate + CoA + H(+). It carries out the reaction (9Z)-hexadecenoyl-CoA + H2O = (9Z)-hexadecenoate + CoA + H(+). It catalyses the reaction octadecanoyl-CoA + H2O = octadecanoate + CoA + H(+). The enzyme catalyses (9Z)-octadecenoyl-CoA + H2O = (9Z)-octadecenoate + CoA + H(+). The catalysed reaction is (9Z,12Z)-octadecadienoyl-CoA + H2O = (9Z,12Z)-octadecadienoate + CoA + H(+). It carries out the reaction eicosanoyl-CoA + H2O = eicosanoate + CoA + H(+). It catalyses the reaction (5Z,8Z,11Z,14Z)-eicosatetraenoyl-CoA + H2O = (5Z,8Z,11Z,14Z)-eicosatetraenoate + CoA + H(+). The enzyme catalyses (3S)-3-hydroxy-3-methylglutaryl-CoA + H2O = 3-hydroxy-3-methylglutarate + CoA + H(+). The catalysed reaction is 3alpha,7alpha,12alpha-trihydroxy-5beta-cholestan-26-oyl-CoA + H2O = 3alpha,7alpha,12alpha-trihydroxy-5beta-cholestan-26-oate + CoA + H(+). It carries out the reaction 2-methyloctadecanoyl-CoA + H2O = 2-methyloctadecanoate + CoA + H(+). It catalyses the reaction prostaglandin F2alpha-CoA + H2O = prostaglandin F2alpha + CoA + H(+). With respect to regulation, inhibited by CoASH (IC(50)=10-15 uM). Also inhibited by cysteine-reactive agents. In terms of biological role, catalyzes the hydrolysis of acyl-CoAs into free fatty acids and coenzyme A (CoASH), regulating their respective intracellular levels. Displays no strong substrate specificity with respect to the carboxylic acid moiety of Acyl-CoAs. Hydrolyzes medium length (C2 to C20) straight-chain, saturated and unsaturated acyl-CoAS but is inactive towards substrates with longer aliphatic chains. Moreover, it catalyzes the hydrolysis of CoA esters of bile acids, such as choloyl-CoA and chenodeoxycholoyl-CoA and competes with bile acid CoA:amino acid N-acyltransferase (BAAT). Is also able to hydrolyze CoA esters of dicarboxylic acids. It is involved in the metabolic regulation of peroxisome proliferation. The protein is Acyl-coenzyme A thioesterase 8 (Acot8) of Rattus norvegicus (Rat).